Reading from the N-terminus, the 368-residue chain is 4-hydroxy-3-methylbut-2-en-1-yl diphosphate synthase (flavodoxin) (368 aa).

Residues Cys271, Cys274, Cys306, and Glu313 each contribute to the [4Fe-4S] cluster site.

It belongs to the IspG family. Requires [4Fe-4S] cluster as cofactor.

The catalysed reaction is (2E)-4-hydroxy-3-methylbut-2-enyl diphosphate + oxidized [flavodoxin] + H2O + 2 H(+) = 2-C-methyl-D-erythritol 2,4-cyclic diphosphate + reduced [flavodoxin]. It functions in the pathway isoprenoid biosynthesis; isopentenyl diphosphate biosynthesis via DXP pathway; isopentenyl diphosphate from 1-deoxy-D-xylulose 5-phosphate: step 5/6. In terms of biological role, converts 2C-methyl-D-erythritol 2,4-cyclodiphosphate (ME-2,4cPP) into 1-hydroxy-2-methyl-2-(E)-butenyl 4-diphosphate. The protein is 4-hydroxy-3-methylbut-2-en-1-yl diphosphate synthase (flavodoxin) of Haemophilus influenzae (strain PittGG).